Consider the following 407-residue polypeptide: Arginine deiminase (407 aa).

The active-site Amidino-cysteine intermediate is cysteine 397.

The protein belongs to the arginine deiminase family.

It localises to the cytoplasm. It carries out the reaction L-arginine + H2O = L-citrulline + NH4(+). The protein operates within amino-acid degradation; L-arginine degradation via ADI pathway; carbamoyl phosphate from L-arginine: step 1/2. The sequence is that of Arginine deiminase from Escherichia coli O81 (strain ED1a).